We begin with the raw amino-acid sequence, 702 residues long: Arginine decarboxylase 1 (702 aa).

Lysine 151 is subject to N6-(pyridoxal phosphate)lysine. A substrate-binding site is contributed by 336–346 (IDVGGGLGIDY). Low complexity predominate over residues 668-686 (ASGESSGMSSDSEGSAAGA). Residues 668 to 702 (ASGESSGMSSDSEGSAAGAAEEDDDEWEFMRGLTV) form a disordered region.

It belongs to the Orn/Lys/Arg decarboxylase class-II family. SpeA subfamily. Pyridoxal 5'-phosphate serves as cofactor. Mg(2+) is required as a cofactor. As to expression, expressed in roots, leaves and stems (at protein level).

The catalysed reaction is L-arginine + H(+) = agmatine + CO2. Its pathway is amine and polyamine biosynthesis; agmatine biosynthesis; agmatine from L-arginine: step 1/1. The protein is Arginine decarboxylase 1 (ADC1) of Oryza sativa subsp. japonica (Rice).